We begin with the raw amino-acid sequence, 812 residues long: INO80 complex subunit D (812 aa).

Disordered stretches follow at residues 521–573 (NSRK…LCMP) and 581–600 (EVSSIRSPSTPNLSTEELPD). A compositionally biased stretch (basic residues) spans 524 to 558 (KVQHHQQRKPRKKTKPPALTKKTKKKRRRGPRRPQ). The span at 585–595 (IRSPSTPNLST) shows a compositional bias: polar residues.

This sequence belongs to the INO80D family. Component of the chromatin-remodeling INO80 complex.

It is found in the nucleus. Its function is as follows. Putative regulatory component of the chromatin remodeling INO80 complex which is involved in transcriptional regulation, DNA replication and probably DNA repair. The protein is INO80 complex subunit D of Xenopus laevis (African clawed frog).